We begin with the raw amino-acid sequence, 1735 residues long: Glutamine and serine-rich protein 1 (1735 aa).

Met1 carries the N-acetylmethionine modification. Residues Ala267–Pro297 are compositionally biased toward polar residues. Disordered regions lie at residues Ala267 to Ile301, Thr414 to Thr440, Ser479 to Ala518, and Leu533 to Glu561. Positions Leu417–Thr440 are enriched in low complexity. Phosphoserine is present on residues Ser586, Ser615, and Ser886. Thr949 carries the post-translational modification Phosphothreonine. Residues Gly964–Gly1033 form a disordered region. Polar residues predominate over residues Glu971 to Leu985. Ser987 bears the Phosphoserine mark. A compositionally biased stretch (polar residues) spans Ser997 to Glu1024. Residues Lys1058 and Lys1083 each participate in a glycyl lysine isopeptide (Lys-Gly) (interchain with G-Cter in SUMO2) cross-link. Disordered stretches follow at residues Lys1073–Arg1132 and Arg1178–Asp1217. Over residues Ser1120 to Arg1132 the composition is skewed to basic and acidic residues. A phosphoserine mark is found at Ser1211, Ser1230, Ser1231, and Ser1239. A disordered region spans residues Thr1256–Thr1286. The span at Ala1269 to Thr1286 shows a compositional bias: low complexity. Thr1341 is modified (phosphothreonine). Ser1348 is subject to Phosphoserine. Residues Val1441 to Pro1532 are disordered. Residues Lys1449–Thr1478 show a composition bias toward polar residues. Residues Val1492–Phe1508 are compositionally biased toward basic and acidic residues.

In terms of assembly, interacts with TET1.

It localises to the chromosome. Its function is as follows. Plays an essential role in the protection and maintenance of transcriptional and developmental programs. Protects many bivalent promoters and poised enhancers from hypermethylation, showing a marked preference for these regulatory elements over other types of promoters or enhancers. Mechanistically, cooperates with TET1 and binds to DNA in a common complex to inhibit the binding of DNMT3A/3B and therefore de novo methylation. This Homo sapiens (Human) protein is Glutamine and serine-rich protein 1 (QSER1).